Reading from the N-terminus, the 228-residue chain is MDSRMEIDFMDLNSKPKLSEMEKQHKKVSGMKWPFSLADLATHHEHTFFQNYKSTPIVSINSKNSSLNNYKSTIDPQYFRGTFPLLAKTSTYDSRKNYDNLSPNESTLTIFYMGEVHIFPGISPEKAELIIDLVSKSTTLHMDEILEKVMNKEKYEENKSDPSNASTNYAKGALAMARRATLARFLEKRKHRLIKARPYLYGENLSKFPFDIQQQEEETASSSVHWEN.

One can recognise a Tify domain in the interval 101–136 (LSPNESTLTIFYMGEVHIFPGISPEKAELIIDLVSK). The Jas signature appears at 176-199 (MARRATLARFLEKRKHRLIKARPY). A Nuclear localization signal motif is present at residues 177-184 (ARRATLAR).

The protein belongs to the TIFY/JAZ family. As to quaternary structure, interacts with MYC2 (via N-terminus). JAZ7 competes with MED25 for binding to MYC2. Interacts with MTB1 (via N-terminus).

The protein resides in the nucleus. Its function is as follows. Repressor of jasmonate responses. In Solanum lycopersicum (Tomato), this protein is Protein JAZ7.